We begin with the raw amino-acid sequence, 206 residues long: uncharacterized protein (206 aa).

The chain crosses the membrane as a helical span at residues 21 to 43 (VPINITMSICALTALLKSYSITG).

Its subcellular location is the membrane. This is an uncharacterized protein from Acanthamoeba polyphaga (Amoeba).